Consider the following 456-residue polypeptide: Chromosomal replication initiator protein DnaA 1 (456 aa).

The domain I, interacts with DnaA modulators stretch occupies residues 1 to 68 (MRAWEEFLLL…KASLINNNGK (68 aa)). The domain II stretch occupies residues 68 to 101 (KPIRVRVTSLDKSTPFKETQIQQEKTAYFTMKYG). A domain III, AAA+ region region spans residues 102–320 (DIDPNMSFAN…HALTTLAKRV (219 aa)). ATP is bound by residues Ser150, Gly152, Lys153, and Thr154. The interval 321–456 (AYKKLSHQML…AYQSLDFIED (136 aa)) is domain IV, binds dsDNA.

The protein belongs to the DnaA family. Oligomerizes as a right-handed, spiral filament on DNA at oriC.

It is found in the cytoplasm. Its function is as follows. Plays an essential role in the initiation and regulation of chromosomal replication. ATP-DnaA binds to the origin of replication (oriC) to initiate formation of the DNA replication initiation complex once per cell cycle. Binds the DnaA box (a 9 base pair repeat at the origin) and separates the double-stranded (ds)DNA. Forms a right-handed helical filament on oriC DNA; dsDNA binds to the exterior of the filament while single-stranded (ss)DNA is stabiized in the filament's interior. The ATP-DnaA-oriC complex binds and stabilizes one strand of the AT-rich DNA unwinding element (DUE), permitting loading of DNA polymerase. After initiation quickly degrades to an ADP-DnaA complex that is not apt for DNA replication. Binds acidic phospholipids. This chain is Chromosomal replication initiator protein DnaA 1, found in Chlamydia trachomatis serovar D (strain ATCC VR-885 / DSM 19411 / UW-3/Cx).